A 61-amino-acid polypeptide reads, in one-letter code: Short neurotoxin 1 (61 aa).

4 disulfides stabilise this stretch: C3–C23, C17–C40, C42–C53, and C54–C59.

Belongs to the three-finger toxin family. Short-chain subfamily. Type I alpha-neurotoxin sub-subfamily. Expressed by the venom gland.

It is found in the secreted. Functionally, binds to muscle nicotinic acetylcholine receptor (nAChR) and inhibit acetylcholine from binding to the receptor, thereby impairing neuromuscular transmission. In Naja philippinensis (Philippine cobra), this protein is Short neurotoxin 1.